The primary structure comprises 622 residues: Chaperone protein HscA homolog (622 aa).

Belongs to the heat shock protein 70 family.

Its function is as follows. Chaperone involved in the maturation of iron-sulfur cluster-containing proteins. Has a low intrinsic ATPase activity which is markedly stimulated by HscB. This chain is Chaperone protein HscA homolog, found in Burkholderia pseudomallei (strain 668).